The chain runs to 505 residues: 2,3-bisphosphoglycerate-independent phosphoglycerate mutase (505 aa).

Residues D12 and S62 each coordinate Mn(2+). S62 acts as the Phosphoserine intermediate in catalysis. Residues H123, 153-154 (RD), R185, R191, 257-260 (RPDR), and K330 each bind substrate. Residues D397, H401, D438, H439, and H456 each coordinate Mn(2+).

It belongs to the BPG-independent phosphoglycerate mutase family. In terms of assembly, monomer. It depends on Mn(2+) as a cofactor.

The catalysed reaction is (2R)-2-phosphoglycerate = (2R)-3-phosphoglycerate. It functions in the pathway carbohydrate degradation; glycolysis; pyruvate from D-glyceraldehyde 3-phosphate: step 3/5. Its function is as follows. Catalyzes the interconversion of 2-phosphoglycerate and 3-phosphoglycerate. The protein is 2,3-bisphosphoglycerate-independent phosphoglycerate mutase of Staphylococcus saprophyticus subsp. saprophyticus (strain ATCC 15305 / DSM 20229 / NCIMB 8711 / NCTC 7292 / S-41).